We begin with the raw amino-acid sequence, 282 residues long: Phosphatidylserine decarboxylase proenzyme (282 aa).

Active-site charge relay system; for autoendoproteolytic cleavage activity residues include D88, H145, and S248. The active-site Schiff-base intermediate with substrate; via pyruvic acid; for decarboxylase activity is the S248. At S248 the chain carries Pyruvic acid (Ser); by autocatalysis.

Belongs to the phosphatidylserine decarboxylase family. PSD-B subfamily. Prokaryotic type I sub-subfamily. As to quaternary structure, heterodimer of a large membrane-associated beta subunit and a small pyruvoyl-containing alpha subunit. Pyruvate is required as a cofactor. Is synthesized initially as an inactive proenzyme. Formation of the active enzyme involves a self-maturation process in which the active site pyruvoyl group is generated from an internal serine residue via an autocatalytic post-translational modification. Two non-identical subunits are generated from the proenzyme in this reaction, and the pyruvate is formed at the N-terminus of the alpha chain, which is derived from the carboxyl end of the proenzyme. The autoendoproteolytic cleavage occurs by a canonical serine protease mechanism, in which the side chain hydroxyl group of the serine supplies its oxygen atom to form the C-terminus of the beta chain, while the remainder of the serine residue undergoes an oxidative deamination to produce ammonia and the pyruvoyl prosthetic group on the alpha chain. During this reaction, the Ser that is part of the protease active site of the proenzyme becomes the pyruvoyl prosthetic group, which constitutes an essential element of the active site of the mature decarboxylase.

Its subcellular location is the cell membrane. The enzyme catalyses a 1,2-diacyl-sn-glycero-3-phospho-L-serine + H(+) = a 1,2-diacyl-sn-glycero-3-phosphoethanolamine + CO2. Its pathway is phospholipid metabolism; phosphatidylethanolamine biosynthesis; phosphatidylethanolamine from CDP-diacylglycerol: step 2/2. Functionally, catalyzes the formation of phosphatidylethanolamine (PtdEtn) from phosphatidylserine (PtdSer). The protein is Phosphatidylserine decarboxylase proenzyme of Dechloromonas aromatica (strain RCB).